The following is a 408-amino-acid chain: MLFRKRKPKSDDEVITFDELTRFPMTFYKTIGEDLYSDRDPNVIRRYLLRFYLVLGFLNFNAYVVGEIAYFIVHIMSTTTLLEATAVAPCIGFSFMADFKQFGLTVNRKRLVRLLDDLKEIFPLDLEAQRKYNVSFYRKHMNRVMTLFTILCMTYTSSFSFYPAIKSTIKYYLMGSEIFERNYGFHILFPYDAETDLTVYWFSYWGLAHCAYVAGVSYVCVDLLLIATITQLTMHFNFIANDLEAYEGGDHTDEENIKYLHNLVVYHARALDLSEEVNNIFSFLILWNFIAASLVICFAGFQITASNVEDIVLYFIFFSASLVQVFVVCYYGDEMISSSSRIGHSAFNQNWLPCSTKYKRILQFIIARSQKPASIRPPTFPPISFNTFMKVISMSYQFFALLRTTYYG.

Residues 1 to 52 (MLFRKRKPKSDDEVITFDELTRFPMTFYKTIGEDLYSDRDPNVIRRYLLRFY) lie on the Cytoplasmic side of the membrane. Residues 53-73 (LVLGFLNFNAYVVGEIAYFIV) traverse the membrane as a helical segment. Position 74 (His-74) is a topological domain, extracellular. The chain crosses the membrane as a helical span at residues 75–95 (IMSTTTLLEATAVAPCIGFSF). The Cytoplasmic portion of the chain corresponds to 96–144 (MADFKQFGLTVNRKRLVRLLDDLKEIFPLDLEAQRKYNVSFYRKHMNRV). A helical membrane pass occupies residues 145 to 165 (MTLFTILCMTYTSSFSFYPAI). Over 166 to 209 (KSTIKYYLMGSEIFERNYGFHILFPYDAETDLTVYWFSYWGLAH) the chain is Extracellular. A helical membrane pass occupies residues 210-230 (CAYVAGVSYVCVDLLLIATIT). The Cytoplasmic segment spans residues 231-276 (QLTMHFNFIANDLEAYEGGDHTDEENIKYLHNLVVYHARALDLSEE). A helical transmembrane segment spans residues 277 to 301 (VNNIFSFLILWNFIAASLVICFAGF). At 302–310 (QITASNVED) the chain is on the extracellular side. The helical transmembrane segment at 311 to 331 (IVLYFIFFSASLVQVFVVCYY) threads the bilayer. Over 332 to 378 (GDEMISSSSRIGHSAFNQNWLPCSTKYKRILQFIIARSQKPASIRPP) the chain is Cytoplasmic. A helical transmembrane segment spans residues 379 to 399 (TFPPISFNTFMKVISMSYQFF). At 400-408 (ALLRTTYYG) the chain is on the extracellular side.

It belongs to the insect chemoreceptor superfamily. Heteromeric odorant receptor channel (TC 1.A.69) family. Or49a subfamily. As to quaternary structure, interacts with Orco. Complexes exist early in the endomembrane system in olfactory sensory neurons (OSNs), coupling these complexes to the conserved ciliary trafficking pathway.

The protein resides in the cell membrane. Odorant receptor which mediates acceptance or avoidance behavior, depending on its substrates. The odorant receptor repertoire encodes a large collection of odor stimuli that vary widely in identity, intensity, and duration. May form a complex with Orco to form odorant-sensing units, providing sensitive and prolonged odorant signaling and calcium permeability. The polypeptide is Putative odorant receptor 92a (Or92a) (Drosophila melanogaster (Fruit fly)).